The chain runs to 394 residues: Elongation factor Tu (394 aa).

In terms of domain architecture, tr-type G spans 10–204 (KPHVNVGTIG…ALDSYIPEPE (195 aa)). Positions 19 to 26 (GHVDHGKT) are G1. 19–26 (GHVDHGKT) contributes to the GTP binding site. Mg(2+) is bound at residue Thr26. Residues 60 to 64 (GITIN) are G2. The tract at residues 81-84 (DCPG) is G3. Residues 81–85 (DCPGH) and 136–139 (NKCD) each bind GTP. The segment at 136 to 139 (NKCD) is G4. The segment at 174 to 176 (SAL) is G5.

The protein belongs to the TRAFAC class translation factor GTPase superfamily. Classic translation factor GTPase family. EF-Tu/EF-1A subfamily. In terms of assembly, monomer.

The protein localises to the cytoplasm. The catalysed reaction is GTP + H2O = GDP + phosphate + H(+). In terms of biological role, GTP hydrolase that promotes the GTP-dependent binding of aminoacyl-tRNA to the A-site of ribosomes during protein biosynthesis. The polypeptide is Elongation factor Tu (Shewanella sp. (strain ANA-3)).